Consider the following 364-residue polypeptide: UDP-3-O-acylglucosamine N-acyltransferase (364 aa).

Histidine 258 functions as the Proton acceptor in the catalytic mechanism.

The protein belongs to the transferase hexapeptide repeat family. LpxD subfamily. Homotrimer.

The catalysed reaction is a UDP-3-O-[(3R)-3-hydroxyacyl]-alpha-D-glucosamine + a (3R)-hydroxyacyl-[ACP] = a UDP-2-N,3-O-bis[(3R)-3-hydroxyacyl]-alpha-D-glucosamine + holo-[ACP] + H(+). It functions in the pathway bacterial outer membrane biogenesis; LPS lipid A biosynthesis. Catalyzes the N-acylation of UDP-3-O-acylglucosamine using 3-hydroxyacyl-ACP as the acyl donor. Is involved in the biosynthesis of lipid A, a phosphorylated glycolipid that anchors the lipopolysaccharide to the outer membrane of the cell. The polypeptide is UDP-3-O-acylglucosamine N-acyltransferase (Burkholderia orbicola (strain AU 1054)).